The following is a 226-amino-acid chain: uncharacterized protein (226 aa).

The protein belongs to the IIV-6 350L family.

This is an uncharacterized protein from Invertebrate iridescent virus 3 (IIV-3).